A 622-amino-acid chain; its full sequence is Telomerase-associated protein of 75 kDa (622 aa).

As to quaternary structure, component of the telomerase holoenzyme complex, composed of the catalytic core (the catalytic subunit TERT, the telomerase RNA template component TER and TAP65/p65), which is associated with two heterotrimeric subcomplexes: (i) the replication protein A (RPA)-related subcomplex, composed of TEB1, RPA2/TEB2 and RPA3/TEB3 and (ii) the CST-like subcomplex, composed of TAP75/p75, TAP45/p45 and TAP19/p19. TEB1 and the CST-like subcomplex are tethered to the catalytic core by TAP50/p50.

The protein resides in the chromosome. Its subcellular location is the telomere. Component of a CST-like subcomplex of the holoenzyme telomerase ribonucleoprotein complex, which stimulates telomerase complementary-strand synthesis. Telomerase is an essential ribonucleoprotein enzyme that copies new telomeric repeats onto chromosome ends by repetitively synthesizing the short telomere-repeat sequence 5'-TTGGGG-3' using an RNA template component TER. The CST-like subcomplex (also named 7-4-1) binds telomeric single-stranded DNA and coordinates telomere G-strand and C-strand synthesis. The chain is Telomerase-associated protein of 75 kDa from Tetrahymena thermophila (strain SB210).